Reading from the N-terminus, the 170-residue chain is Photosystem II extrinsic protein V (170 aa).

The signal sequence occupies residues 1 to 33; that stretch reads MASVFSSLRRSLKGLLVLIPVLIGLAVTSPAQA. Cys70, Cys73, His74, and His125 together coordinate heme c.

It belongs to the cytochrome c family. PsbV subfamily. As to quaternary structure, PSII is composed of 1 copy each of membrane proteins PsbA, PsbB, PsbC, PsbD, PsbE, PsbF, PsbH, PsbI, PsbJ, PsbK, PsbL, PsbM, PsbT, PsbX, PsbY, PsbZ, Psb30/Ycf12, peripheral proteins PsbO, CyanoQ (PsbQ), PsbU, PsbV and a large number of cofactors. It forms dimeric complexes. Heme c serves as cofactor.

It localises to the cellular thylakoid membrane. Functionally, one of the extrinsic, lumenal subunits of photosystem II (PSII). PSII is a light-driven water plastoquinone oxidoreductase, using light energy to abstract electrons from H(2)O, generating a proton gradient subsequently used for ATP formation. The extrinsic proteins stabilize the structure of photosystem II oxygen-evolving complex (OEC), the ion environment of oxygen evolution and protect the OEC against heat-induced inactivation. Low-potential cytochrome c that plays a role in the OEC of PSII. This chain is Photosystem II extrinsic protein V, found in Synechococcus sp. (strain CC9605).